The following is a 320-amino-acid chain: Protein MRH1 (320 aa).

Residues 1–34 (MSTFETLIKRGGNEAIKINPPTGADFHITSRGSD) lie on the Extracellular side of the membrane. The helical transmembrane segment at 35 to 55 (WFWTCFCCYLLFGLILTFLMF) threads the bilayer. Topologically, residues 56–62 (RKPVNDR) are cytoplasmic. A helical transmembrane segment spans residues 63 to 83 (FFYLTGIAPNFFMCIAYFTMA). The Extracellular portion of the chain corresponds to 84–116 (SNLGWIPVKAKYNHVQTSTQKEHPGYRQIFYSR). A helical transmembrane segment spans residues 117 to 137 (FVGWFLALPWPIIQICMLAGT). Over 138-141 (PFWQ) the chain is Cytoplasmic. The helical transmembrane segment at 142–162 (MAFNVCITEFFTVCWLIAACV) threads the bilayer. At 163–167 (HSTYK) the chain is on the extracellular side. Residues 168 to 188 (WGYYTIGLGAAIVVSISVMTT) form a helical membrane-spanning segment. Topologically, residues 189–204 (SYNLVKQRDNDIRLTF) are cytoplasmic. Residues 205-225 (LVFFSIIMFLWIIAYPTCFGI) form a helical membrane-spanning segment. The Extracellular segment spans residues 226–238 (TDGGNVLQPDSAG). Residues 239-259 (IFYGIIDLILMCFIPTLLVPI) traverse the membrane as a helical segment. Residues 260–320 (ANHFGADKLG…KSKKSKKSEE (61 aa)) are Cytoplasmic-facing. The interval 285-320 (APVASPRPAATPNLSKDKKKKSKKSKKSKKSKKSEE) is disordered. S289 bears the Phosphoserine mark. Position 295 is a phosphothreonine (T295). Residue S299 is modified to Phosphoserine. Residues 301-320 (DKKKKSKKSKKSKKSKKSEE) are compositionally biased toward basic residues.

This sequence belongs to the archaeal/bacterial/fungal opsin family.

Its subcellular location is the cell membrane. The protein localises to the mitochondrion. The protein resides in the bud. This Saccharomyces cerevisiae (strain ATCC 204508 / S288c) (Baker's yeast) protein is Protein MRH1 (MRH1).